Reading from the N-terminus, the 514-residue chain is Vacuolar aminopeptidase 1 (514 aa).

Residues 1-45 constitute a propeptide, required for vacuolar localization. Mediates aggregation and vesicle formation in Cvt pathway; the sequence is MEEQREILEQLKKTLQMLTVEPSKNNQIANEEKEKKENENSWCIL. N-linked (GlcNAc...) asparagine glycosylation is found at Asn-107 and Asn-110. Position 132 (His-132) interacts with Zn(2+). His-210 contacts substrate. Positions 303, 339, and 340 each coordinate Zn(2+). Glu-339 is a substrate binding site. Ser-356 is subject to Phosphoserine. Asp-385 contributes to the Zn(2+) binding site. Substrate contacts are provided by Asp-385 and His-388. An N-linked (GlcNAc...) asparagine glycan is attached at Asn-448. His-479 contributes to the Zn(2+) binding site.

The protein belongs to the peptidase M18 family. As to quaternary structure, homododecamer. The precursor form of aminopeptidase 1 (prApe1) assembles into dodecamers and further aggregates into higher multimers (the Ape1 complex) in the cytoplasm. The Ape1 complex is disaggregated in the vacuolar lumen, but mature aminopeptidase 1 (mApe1) retains its dodecameric form. Dodecamer assembly in the cytoplasm is essential for formation of an enzymatically active complex. If cytoplasmic homododecamerization of prApe1 is disturbed in mutants, homododecamers of mApe1 will form in the vacuole, but they are enzymatically inactive. Interacts with ATG19. It depends on Zn(2+) as a cofactor. In terms of processing, synthesized in a precursor form (prApe1) that has an amino-terminal propeptide. The N-terminal extension of the 61 kDa precursor is proteolytically processed in two sequential steps. The first step involves proteinase A (PrA/PEP4) and produces a 55 kDa unstable intermediate (iAPI). The second step involves proteinase B (PrB/PRB1) and converts iAPI into the 50 kDa stable, mature enzyme (mApe1).

Its subcellular location is the vacuole. The enzyme catalyses Release of an N-terminal amino acid, preferably a neutral or hydrophobic one, from a polypeptide. Aminoacyl-arylamides are poor substrates.. Its activity is regulated as follows. Strongly and specifically activated by Cl(-) and Br(-), which act as positive allosteric effectors. Inactivated by metal-chelating agents. Functionally, resident vacuolar enzyme that catalyzes the removal of amino acids from the N-terminus of peptides and proteins. Also acts as the major cargo protein of the cytoplasm-to-vacuole targeting (Cvt) pathway. The precursor form of aminopeptidase 1 (prApe1) assembles into dodecamers and the propeptide mediates the aggregation of dodecamers into higher multimers. The multimers are then recognized via the propeptide by their receptor ATG19, and ATG19 further interacts with ATG11, which tethers the APE1-ATG19 complex to the pre-autophagosomal structure (PAS). The cargo-receptor complex (also Cvt complex) is selectively enwrapped by a double-membrane structure termed the Cvt vesicle under vegetative growth conditions and by a similar but larger double-membrane structure termed the autophagosome under nitrogen starvation conditions. The Cvt vesicle or the autophagosome fuses with the vacuolar membrane and release its content in the vacuolar lumen. In the vacuole, prApe1 is processed into mature aminopeptidase 1 (mApe1). In Saccharomyces cerevisiae (strain ATCC 204508 / S288c) (Baker's yeast), this protein is Vacuolar aminopeptidase 1.